Here is a 1682-residue protein sequence, read N- to C-terminus: MRCFFRWTKSFVTAPWSLIFILFTIQYEYGSGKKYGGPCGGRNCSVCQCFPEKGSRGHPGPLGPQGPIGPLGPLGPIGIPGEKGERGDSGSPGPPGEKGDKGPTGVPGFPGVDGVPGHPGPPGPRGKPGVDGYNGSRGDPGYPGERGAPGPGGPPGQPGENGEKGRSVYITGGVKGIQGDRGDPGPPGLPGSRGAQGSPGPMGHAGAPGLAGPIGHPGSPGLKGNPATGLKGQRGEPGEVGQRGPPGPTLLVQPPDLSIYKGEKGVKGMPGMIGPPGPPGRKGAPGVGIKGEKGIPGFPGPRGEPGSHGPPGFPGFKGIQGAAGEPGLFGFLGPKGDLGDRGYPGPPGILLTPAPPLKGVPGDPGPPGYYGEIGDVGLPGPPGPPGRPGETCPGMMGPPGPPGVPGPPGFPGEAGVPGRLDCAPGKPGKPGLPGLPGAPGPEGPPGSDVIYCRPGCPGPMGEKGKVGPPGRRGAKGAKGNKGLCTCPPGPMGPPGPPGPPGRQGSKGDLGLPGWHGEKGDPGQPGAEGPPGPPGRPGAMGPPGHKGEKGDMVISRVKGQKGERGLDGPPGFPGPHGQDGGDGRPGERGDPGPRGDHKDAAPGERGLPGLPGPPGRTGPEGPPGLGFPGPPGQRGLPGEPGRPGTRGFDGTKGQKGDSILCNVSYPGKPGLPGLDGPPGLKGFPGPPGAPGMRCPDGQKGQRGKPGMSGIPGPPGFRGDMGDPGIKGEKGTSPIGPPGPPGSPGKDGQKGIPGDPAFGDPGPPGERGLPGAPGMKGQKGHPGCPGAGGPPGIPGSPGLKGPKGREGSRGFPGIPGSPGHSCERGAPGIPGQPGLPGTPGDPGAPGWKGQPGDMGPSGPAGMKGLPGLPGLPGADGLRGPPGIPGPNGEDGLPGLPGLKGLPGLPGFPGFPGERGKPGPDGEPGRKGEVGEKGWPGLKGDLGERGAKGDRGLPGDAGEAVTSRKGEPGDAGPPGDGGFSGERGDKGSSGMRGGRGDPGRDGLPGLHRGQPGIDGPPGPPGPPGPPGSPGLRGVIGFPGFPGDQGDPGSPGPPGFPGDDGARGPKGYKGDPASQCGPPGPKGEPGSPGYQGRTGVPGEKGFPGDEGPRGPPGRPGQPGSFGPPGCPGDPGMPGLKGHPGEVGDPGPRGDAGDFGRPGPAGVKGPLGSPGLNGLHGLKGEKGTKGASGLLEMGPPGPMGMPGQKGEKGDPGSPGISPPGLPGEKGFPGPPGRPGPPGPAGAPGRAAKGDIPDPGPPGDRGPPGPDGPRGVPGPPGSPGNVDLLKGDPGDCGLPGPPGSRGPPGPPGCQGPPGCDGKDGQKGPMGLPGLPGPPGLPGAPGEKGLPGPPGRKGPVGPPGCRGEPGPPADVDSCPRIPGLPGVPGPRGPEGAMGEPGRRGLPGPGCKGEPGPDGRRGQDGIPGSPGPPGRKGDTGEAGCPGAPGPPGPTGDPGPKGFGPGSLSGFLLVLHSQTDQEPACPVGMPRLWTGYSLLYMEGQEKAHNQDLGLAGSCLPVFSTLPFAYCNIHQVCHYAQRNDRSYWLSSAAPLPMMPLSEEEIRSYISRCAVCEAPAQAVAVHSQDQSIPPCPRTWRSLWIGYSFLMHTGAGDQGGGQALMSPGSCLEDFRAAPFVECQGRQGTCHFFANEYSFWLTTVNPDLQFASGPSPDTLKEVQAQRRKISRCQVCMKHS.

The first 32 residues, methionine 1–glycine 32, serve as a signal peptide directing secretion. The segment at serine 31–arginine 56 is 7S domain. Residue asparagine 43 is glycosylated (N-linked (GlcNAc...) asparagine). Disordered regions lie at residues arginine 56–proline 255 and proline 379–glycine 1453. The triple-helical region stretch occupies residues glycine 57 to glycine 1451. Positions arginine 86–aspartate 88 match the Cell attachment site motif. Residues proline 103–proline 116 show a composition bias toward low complexity. Residue asparagine 134 is glycosylated (N-linked (GlcNAc...) asparagine). Short sequence motifs (cell attachment site) lie at residues arginine 137 to aspartate 139 and arginine 181 to aspartate 183. Residues methionine 396–phenylalanine 410 are compositionally biased toward pro residues. Residues proline 411 to lysine 426 are compositionally biased toward low complexity. A compositionally biased stretch (pro residues) spans proline 487–proline 500. The segment covering aspartate 578–proline 601 has biased composition (basic and acidic residues). 2 short sequence motifs (cell attachment site) span residues arginine 587–aspartate 589 and arginine 593–aspartate 595. Residues leucine 609–proline 621 show a composition bias toward pro residues. The span at glutamine 632–phenylalanine 647 shows a compositional bias: low complexity. Asparagine 661 is a glycosylation site (N-linked (GlcNAc...) asparagine). A compositionally biased stretch (low complexity) spans proline 665–phenylalanine 682. Positions arginine 716–aspartate 718 match the Cell attachment site motif. Composition is skewed to low complexity over residues proline 742–aspartate 758 and proline 857–leucine 902. Basic and acidic residues-rich tracts occupy residues glutamate 911 to glutamate 929 and aspartate 938 to leucine 950. Residues glycine 969 to glycine 978 show a composition bias toward gly residues. Short sequence motifs (cell attachment site) lie at residues arginine 980–aspartate 982 and arginine 992–aspartate 994. Residues aspartate 998 to isoleucine 1010 show a composition bias toward low complexity. Positions aspartate 1011–serine 1025 are enriched in pro residues. Residues phenylalanine 1034 to proline 1044 are compositionally biased toward low complexity. Positions arginine 1144–aspartate 1146 match the Cell attachment site motif. 5 stretches are compositionally biased toward pro residues: residues proline 1223–alanine 1235, aspartate 1248–serine 1272, proline 1289–glutamine 1304, proline 1340–proline 1351, and alanine 1435–aspartate 1444. A Collagen IV NC1 domain is found at glycine 1457–serine 1682. Cystine bridges form between cysteine 1472-cysteine 1561, cysteine 1505-cysteine 1558, cysteine 1517-cysteine 1523, cysteine 1580-cysteine 1678, cysteine 1614-cysteine 1675, and cysteine 1626-cysteine 1633.

The protein belongs to the type IV collagen family. There are six type IV collagen isoforms, alpha 1(IV)-alpha 6(IV), each of which can form a triple helix structure with 2 other chains to generate type IV collagen network. The alpha 3(IV) chain forms a triple helical protomer with alpha 4(IV) and alpha 5(IV); this triple helical structure dimerizes through NC1-NC1 domain interactions such that the alpha 3(IV), alpha 4(IV) and alpha 5(IV) chains of one protomer connect with the alpha 5(IV), alpha 4(IV) and alpha 3(IV) chains of the opposite protomer, respectively. Associates with LAMB2 at the neuromuscular junction and in GBM. Prolines at the third position of the tripeptide repeating unit (G-X-Y) are hydroxylated in some or all of the chains. In terms of processing, type IV collagens contain numerous cysteine residues which are involved in inter- and intramolecular disulfide bonding. 12 of these, located in the NC1 domain, are conserved in all known type IV collagens. Post-translationally, the trimeric structure of the NC1 domains is stabilized by covalent bonds between Lys and Met residues. Expressed in Bruch's membrane, outer plexiform layer, inner nuclear layer, inner plexiform layer, ganglion cell layer, inner limiting membrane and around the blood vessels of the retina (at protein level). Highly expressed in kidney and lung. Detected at lower levels in heart, muscle and skin.

The protein resides in the secreted. It is found in the extracellular space. Its subcellular location is the extracellular matrix. The protein localises to the basement membrane. Type IV collagen is the major structural component of glomerular basement membranes (GBM), forming a 'chicken-wire' meshwork together with laminins, proteoglycans and entactin/nidogen. The chain is Collagen alpha-4(IV) chain from Mus musculus (Mouse).